The sequence spans 109 residues: Small ribosomal subunit protein bS20 (109 aa).

The protein belongs to the bacterial ribosomal protein bS20 family.

Binds directly to 16S ribosomal RNA. The sequence is that of Small ribosomal subunit protein bS20 from Synechococcus sp. (strain JA-2-3B'a(2-13)) (Cyanobacteria bacterium Yellowstone B-Prime).